The primary structure comprises 430 residues: C-terminal-binding protein 1 (430 aa).

Residues 1-59 are interaction with GLIS2 1; the sequence is MSGVRPPIMNGPMHPRPLVALLDGRDCTVEMPILKDVATVAFCDAQSTQEIHEKVLNEA. Residues S89, 169–174, D193, 226–232, 253–255, and D279 each bind NAD(+); these read IGLGRV, CGLNEHN, and TAR. The active site involves R255. Residues 277-349 form an interaction with GLIS2 2 region; it reads ALDVHESEPF…VNKDHLTAAT (73 aa). E284 is a catalytic residue. At S289 the chain carries Phosphoserine. H304 serves as the catalytic Proton donor. Residues 398–430 form a disordered region; that stretch reads SHGLPPVAHPPHAPSPGQTVKPEADRDHTTDQL. S412 carries the post-translational modification Phosphoserine. K418 is covalently cross-linked (Glycyl lysine isopeptide (Lys-Gly) (interchain with G-Cter in SUMO)). Residues 419 to 430 are compositionally biased toward basic and acidic residues; the sequence is PEADRDHTTDQL.

It belongs to the D-isomer specific 2-hydroxyacid dehydrogenase family. In terms of assembly, homo- or heterodimer. Heterodimer with CTBP2. Interacts with ELK3 (via its PXDLS motif). Interacts with RBBP8 (via its PXDLS motif); the interaction is disrupted by binding to adenovirus E1A. Interacts with PNN, MECOM and ZFHX1B. Interacts with ZNF366 (via PXDLS motif). Interaction with SATB1 (non-acetylated form); the interaction stabilizes its attachment to DNA and promotes transcription repression. Interacts with PRDM16; the interaction represses white adipose tissue (WAT)-specific genes expression. Interacts with GLIS2, HIPK2, FOXP1, FOXP2, HDAC4, HDAC5, HDAC9, NRIP1 and WIZ. Interacts with ZNF217. Interacts with BCL6; the interaction is required for BCL6 transcriptional autoinhibition and inhibition of some BCL6 target genes. Interacts with IKZF4. Interacts with MCRIP1 (unphosphorylated form, via the PXDLS motif); competitively inhibiting CTBP-ZEB1 interaction. Interacts with Bassoon/BSN; this interaction targets and anchors CTBP1 to presynapses. Interacts with SIMC1. The cofactor is NAD(+). The level of phosphorylation appears to be regulated during the cell cycle. Phosphorylation by HIPK2 on Ser-412 induces proteasomal degradation. In terms of processing, ADP-ribosylated; when cells are exposed to brefeldin A. Post-translationally, sumoylation on Lys-418 is promoted by the E3 SUMO-protein ligase CBX4.

It localises to the cytoplasm. Its subcellular location is the nucleus. The protein localises to the synapse. It is found in the synaptosome. Its function is as follows. Corepressor targeting diverse transcription regulators such as GLIS2 or BCL6. Has dehydrogenase activity. Involved in controlling the equilibrium between tubular and stacked structures in the Golgi complex. Functions in brown adipose tissue (BAT) differentiation. The polypeptide is C-terminal-binding protein 1 (Ctbp1) (Rattus norvegicus (Rat)).